The chain runs to 182 residues: Vomeronasal secretory protein 1 (182 aa).

Positions methionine 1 to alanine 18 are cleaved as a signal peptide. Asparagine 30 is a glycosylation site (N-linked (GlcNAc...) asparagine). A disulfide bridge connects residues cysteine 76 and cysteine 168.

The protein belongs to the calycin superfamily. Lipocalin family. In terms of tissue distribution, specifically expressed in vomeronasal and posterior glands of the nasal septum, the ducts of which open into the lumen of the vomeronasal organ.

Its subcellular location is the secreted. Transport of lipophilic molecules, possible pheromone-carrier. The protein is Vomeronasal secretory protein 1 (Lcn3) of Mus musculus (Mouse).